We begin with the raw amino-acid sequence, 323 residues long: tRNA U34 carboxymethyltransferase (323 aa).

Carboxy-S-adenosyl-L-methionine contacts are provided by residues Lys-93, Trp-107, Lys-112, Gly-132, 154–156, 182–183, Met-197, Tyr-201, and Arg-316; these read DPS and VE.

It belongs to the class I-like SAM-binding methyltransferase superfamily. CmoB family. Homotetramer.

The catalysed reaction is carboxy-S-adenosyl-L-methionine + 5-hydroxyuridine(34) in tRNA = 5-carboxymethoxyuridine(34) in tRNA + S-adenosyl-L-homocysteine + H(+). Its function is as follows. Catalyzes carboxymethyl transfer from carboxy-S-adenosyl-L-methionine (Cx-SAM) to 5-hydroxyuridine (ho5U) to form 5-carboxymethoxyuridine (cmo5U) at position 34 in tRNAs. In Pseudoalteromonas atlantica (strain T6c / ATCC BAA-1087), this protein is tRNA U34 carboxymethyltransferase.